The sequence spans 504 residues: Cytochrome P450 monooxygenase gsfF (504 aa).

A signal peptide spans 1-16; the sequence is MTVLFILSAGLVAVFG. N-linked (GlcNAc...) asparagine glycans are attached at residues asparagine 97 and asparagine 150. Cysteine 450 contributes to the heme binding site.

This sequence belongs to the cytochrome P450 family. It depends on heme as a cofactor.

The catalysed reaction is griseophenone B + reduced [NADPH--hemoprotein reductase] + O2 + H(+) = desmethyl-dehydrogriseofulvin + oxidized [NADPH--hemoprotein reductase] + 2 H2O. Its pathway is secondary metabolite biosynthesis; terpenoid biosynthesis. In terms of biological role, cytochrome P450 monooxygenase; part of the gene cluster that mediates the biosynthesis of griseofulvin, an important antifungal drug that has been in use for a long time for treating dermatophyte infections. The first step of the pathway is the formation of the heptaketide backbone by gsfA which is initiated by priming with acetyl-CoA, followed by sequential condensations of 6 malonyl-CoA units. The resulting benzophenone can undergo a spontaneous dehydration to form norlichexanthone. However, the true precursor for the griseofulvin biosynthesis is not norlichexanthone, but the heptaketide benzophenone that is O-methylated at 3-OH by gsfB to produce griseophenone D which is further methylated at 9-OH by gsfC to yield griseophenone C. Griseophenone C is then substrate of halogenase gsfI which is responsible for the regio-specific chlorination at the C13 position to form griseophenone B. The cytochrome P450 gsfF catalyzes the coupling of orcinol and phloroglucinol rings in griseophenone B to form desmethyl-dehydrogriseofulvin A which is further methylated at 5-OH by gsfD to yield dehydrogriseofulvin. Finally, gsfE performs stereospecific reduction of enone 18 of dehydrogriseofulvin to afford the final product griseofulvin. The protein is Cytochrome P450 monooxygenase gsfF of Penicillium aethiopicum.